The chain runs to 237 residues: UPF0758 protein Veis_1654 (237 aa).

Residues 115–237 (VFDTPDAVKH…ALSMAEMGLL (123 aa)) enclose the MPN domain. 3 residues coordinate Zn(2+): H186, H188, and D199. The JAMM motif motif lies at 186–199 (HNHPSGSVQPSRAD).

It belongs to the UPF0758 family.

The protein is UPF0758 protein Veis_1654 of Verminephrobacter eiseniae (strain EF01-2).